A 103-amino-acid chain; its full sequence is Large ribosomal subunit protein bL21 (103 aa).

It belongs to the bacterial ribosomal protein bL21 family. In terms of assembly, part of the 50S ribosomal subunit. Contacts protein L20.

Its function is as follows. This protein binds to 23S rRNA in the presence of protein L20. The polypeptide is Large ribosomal subunit protein bL21 (Clostridium botulinum (strain Alaska E43 / Type E3)).